A 660-amino-acid chain; its full sequence is Phosphatidylinositol-3-phosphate phosphatase MTMR7 (660 aa).

Residues 126–504 (GWLLVDLSEE…FTYKFWNGMY (379 aa)) enclose the Myotubularin phosphatase domain. 3 residues coordinate a 1,2-diacyl-sn-glycero-3-phospho-(1D-myo-inositol-3-phosphate): Asn250, Asn275, and Ile276. Residue Cys338 is the Phosphocysteine intermediate of the active site. A 1,2-diacyl-sn-glycero-3-phospho-(1D-myo-inositol-3-phosphate)-binding residues include Ser339, Asp340, Gly341, Trp342, Asp343, Arg344, and Arg384. Residues 514–548 (RQSVTDYLMAVKEESQQLEEELESLEERLEKIQKV) adopt a coiled-coil conformation. The disordered stretch occupies residues 550 to 660 (LHGTKVKSKQ…DSDEAVFLTA (111 aa)). Positions 566–596 (SGFSTSDHSTANTPQDYSGNSKSFPSRSPSQ) are enriched in polar residues. Thr578 carries the phosphothreonine modification. A compositionally biased stretch (basic and acidic residues) spans 641–653 (APSEDSGKDRDSD).

It belongs to the protein-tyrosine phosphatase family. Non-receptor class myotubularin subfamily. In terms of assembly, heterodimer (via C-terminus) with MTMR9 (via coiled coil domain); the interaction enhances MTMR7 catalytic activity. Does not homodimerize. Interacts with RAB1B (in GDP-bound form). In terms of tissue distribution, highly expressed in brain (at protein level). Expressed at low levels in liver, kidney and testis.

It localises to the cytoplasm. The protein resides in the endomembrane system. The enzyme catalyses a 1,2-diacyl-sn-glycero-3-phospho-(1D-myo-inositol-3-phosphate) + H2O = a 1,2-diacyl-sn-glycero-3-phospho-(1D-myo-inositol) + phosphate. It carries out the reaction 1D-myo-inositol 1,3-bisphosphate + H2O = 1D-myo-inositol 1-phosphate + phosphate. With respect to regulation, interaction with MTMR9 increases phosphatase activity. Lipid phosphatase that specifically dephosphorylates the D-3 position of phosphatidylinositol 3-phosphate (PtdIns(3)P) and inositol 1,3-bisphosphate (Ins(1,3)P2). The chain is Phosphatidylinositol-3-phosphate phosphatase MTMR7 from Mus musculus (Mouse).